A 452-amino-acid chain; its full sequence is MNSGILQVFQRELICPICMNYFIDPVTIDCGHSFCRPCFYLNWKDSPFLVQCSECTKSTGQINLKTNIHFKKMASLARKVSLWLFLSSEEQMCGTHRETKKMFCEVDRSLLCLLCSSSQEHRDHRHCPIESAAEEHQEKLLQKMQSLWEKACENHRNLNVETTRTRCWKDYVNLRLEAIRAEYQKMPAFHHEEEKHNLEMLKKKGKDIFHRLHLSKAKMAHRREILRGMYEELNEMCHKPDVELLQAFGDILHRSESVLLHMPQPLNPELSAGPITGLRDRLNQFRVHITLHHEEANSDIFLCEILRSMCIGCDHQDVPYFTATPRSFLAWGAQTFTSGKYYWEVHVGDSWNWAFGVCNMYWKEKNQNEKIDGEDGLFLLGCVKNDIQRSLFTTSPLLLQYIPRPTSRVGLFLDCEAKTVSFVDVNQSSLIYTIPNCSFSPPLRPIFCCIHF.

The segment at Cys-15–Thr-56 adopts an RING-type zinc-finger fold. Residues Ser-88–Ile-129 form a B box-type zinc finger. Zn(2+) is bound by residues Cys-93, His-96, Cys-115, and His-121. In terms of domain architecture, B30.2/SPRY spans Glu-269–Phe-452.

Belongs to the TRIM/RBCC family.

This is Putative tripartite motif-containing protein 49B (TRIM49B) from Homo sapiens (Human).